Consider the following 291-residue polypeptide: MQENLLEKQFLNHPLYAKIQELKALNLACNFSLDDSVNLSTNSQAKDEILTITKKLKPWRKGPFKIDDLFIDTEWQSFIKFNILKPFMGEISQKCVADIGCNNGYYMFKMLEFNPAKLIGFDPSIKYRLQFELINALAKTPIKYELLGVEDLPNYGLKFDVIFCLGVIYHRSDPIKMLKDLKAGLNKNGVVFLDTMYIEDEREIALVPNKTYSKIPNIYFVPSISALKNWCERAGFKEFEVLATKKTDENEQRKTEWIDSFSLENFLDPKDKNLTIEGYEAPKRVYIRIKI.

Carboxy-S-adenosyl-L-methionine is bound by residues K61, W75, K80, G100, 122–124 (DPS), 149–150 (VE), Y169, and R284.

The protein belongs to the class I-like SAM-binding methyltransferase superfamily. CmoB family. In terms of assembly, homotetramer.

The catalysed reaction is carboxy-S-adenosyl-L-methionine + 5-hydroxyuridine(34) in tRNA = 5-carboxymethoxyuridine(34) in tRNA + S-adenosyl-L-homocysteine + H(+). Catalyzes carboxymethyl transfer from carboxy-S-adenosyl-L-methionine (Cx-SAM) to 5-hydroxyuridine (ho5U) to form 5-carboxymethoxyuridine (cmo5U) at position 34 in tRNAs. This Campylobacter jejuni subsp. doylei (strain ATCC BAA-1458 / RM4099 / 269.97) protein is tRNA U34 carboxymethyltransferase.